The chain runs to 174 residues: Protein C (174 aa).

This sequence belongs to the morbillivirus protein C family.

The protein is Protein C (P/V/C) of Canine distemper virus (strain Onderstepoort) (CDV).